The chain runs to 450 residues: Phosphoglucosamine mutase (450 aa).

Catalysis depends on S102, which acts as the Phosphoserine intermediate. Residues S102, D242, D244, and D246 each coordinate Mg(2+). At S102 the chain carries Phosphoserine.

It belongs to the phosphohexose mutase family. Mg(2+) is required as a cofactor. Post-translationally, activated by phosphorylation.

The catalysed reaction is alpha-D-glucosamine 1-phosphate = D-glucosamine 6-phosphate. Functionally, catalyzes the conversion of glucosamine-6-phosphate to glucosamine-1-phosphate. This Staphylococcus haemolyticus (strain JCSC1435) protein is Phosphoglucosamine mutase.